A 323-amino-acid polypeptide reads, in one-letter code: Cyclin-H (323 aa).

A Phosphoserine; by CDK8 modification is found at Ser5. Ser132 is subject to Phosphoserine. Residues 296 to 323 (GYEDDDYVSKKPKQEEEEWTDDDLVDAL) form a disordered region. A Phosphoserine; by CDK8 modification is found at Ser304. Positions 310 to 323 (EEEEWTDDDLVDAL) are enriched in acidic residues. Thr315 carries the post-translational modification Phosphothreonine.

Belongs to the cyclin family. Cyclin C subfamily. Associates primarily with CDK7 and MAT1 to form the CAK complex. CAK can further associate with the core-TFIIH to form the TFIIH basal transcription factor.

It is found in the nucleus. In terms of biological role, regulates CDK7, the catalytic subunit of the CDK-activating kinase (CAK) enzymatic complex. CAK activates the cyclin-associated kinases CDK1, CDK2, CDK4 and CDK6 by threonine phosphorylation. CAK complexed to the core-TFIIH basal transcription factor activates RNA polymerase II by serine phosphorylation of the repetitive C-terminal domain (CTD) of its large subunit (POLR2A), allowing its escape from the promoter and elongation of the transcripts. Involved in cell cycle control and in RNA transcription by RNA polymerase II. Its expression and activity are constant throughout the cell cycle. The chain is Cyclin-H (Ccnh) from Rattus norvegicus (Rat).